The following is a 386-amino-acid chain: Succinate--CoA ligase [ADP-forming] subunit beta (386 aa).

The 236-residue stretch at 9–244 folds into the ATP-grasp domain; the sequence is KEILHKFNVP…YDEEVKEEIE (236 aa). ATP-binding positions include lysine 46, 53 to 55, glutamate 99, serine 102, and glutamate 107; that span reads GRG. Mg(2+) is bound by residues asparagine 199 and aspartate 213. Residues asparagine 264 and 321-323 contribute to the substrate site; that span reads GIM.

This sequence belongs to the succinate/malate CoA ligase beta subunit family. As to quaternary structure, heterotetramer of two alpha and two beta subunits. It depends on Mg(2+) as a cofactor.

It catalyses the reaction succinate + ATP + CoA = succinyl-CoA + ADP + phosphate. It carries out the reaction GTP + succinate + CoA = succinyl-CoA + GDP + phosphate. It participates in carbohydrate metabolism; tricarboxylic acid cycle; succinate from succinyl-CoA (ligase route): step 1/1. Functionally, succinyl-CoA synthetase functions in the citric acid cycle (TCA), coupling the hydrolysis of succinyl-CoA to the synthesis of either ATP or GTP and thus represents the only step of substrate-level phosphorylation in the TCA. The beta subunit provides nucleotide specificity of the enzyme and binds the substrate succinate, while the binding sites for coenzyme A and phosphate are found in the alpha subunit. The protein is Succinate--CoA ligase [ADP-forming] subunit beta of Wolbachia sp. subsp. Brugia malayi (strain TRS).